Reading from the N-terminus, the 365-residue chain is Peptide chain release factor 2 (365 aa).

N5-methylglutamine is present on Q252.

The protein belongs to the prokaryotic/mitochondrial release factor family. Methylated by PrmC. Methylation increases the termination efficiency of RF2.

Its subcellular location is the cytoplasm. Its function is as follows. Peptide chain release factor 2 directs the termination of translation in response to the peptide chain termination codons UGA and UAA. The polypeptide is Peptide chain release factor 2 (prfB) (Haemophilus influenzae (strain ATCC 51907 / DSM 11121 / KW20 / Rd)).